The chain runs to 366 residues: Chorismate synthase (366 aa).

The NADP(+) site is built by R48 and R54. FMN-binding positions include 125 to 127, 241 to 242, G285, 300 to 304, and R326; these read RSS, NA, and KPTSS.

Belongs to the chorismate synthase family. Homotetramer. It depends on FMNH2 as a cofactor.

It carries out the reaction 5-O-(1-carboxyvinyl)-3-phosphoshikimate = chorismate + phosphate. The protein operates within metabolic intermediate biosynthesis; chorismate biosynthesis; chorismate from D-erythrose 4-phosphate and phosphoenolpyruvate: step 7/7. In terms of biological role, catalyzes the anti-1,4-elimination of the C-3 phosphate and the C-6 proR hydrogen from 5-enolpyruvylshikimate-3-phosphate (EPSP) to yield chorismate, which is the branch point compound that serves as the starting substrate for the three terminal pathways of aromatic amino acid biosynthesis. This reaction introduces a second double bond into the aromatic ring system. In Cereibacter sphaeroides (strain ATCC 17029 / ATH 2.4.9) (Rhodobacter sphaeroides), this protein is Chorismate synthase.